A 297-amino-acid polypeptide reads, in one-letter code: Homoserine kinase (297 aa).

Residue Pro-82 to Ser-92 participates in ATP binding.

This sequence belongs to the GHMP kinase family. Homoserine kinase subfamily.

The protein resides in the cytoplasm. It catalyses the reaction L-homoserine + ATP = O-phospho-L-homoserine + ADP + H(+). Its pathway is amino-acid biosynthesis; L-threonine biosynthesis; L-threonine from L-aspartate: step 4/5. Its function is as follows. Catalyzes the ATP-dependent phosphorylation of L-homoserine to L-homoserine phosphate. The sequence is that of Homoserine kinase from Bacillus cereus (strain ATCC 10987 / NRS 248).